The chain runs to 68 residues: UPF0434 protein BMA10229_A1047 (68 aa).

It belongs to the UPF0434 family.

The protein is UPF0434 protein BMA10229_A1047 of Burkholderia mallei (strain NCTC 10229).